Here is a 373-residue protein sequence, read N- to C-terminus: Anhydro-N-acetylmuramic acid kinase (373 aa).

Residue 12-19 participates in ATP binding; sequence GTSLDGVD.

Belongs to the anhydro-N-acetylmuramic acid kinase family.

It carries out the reaction 1,6-anhydro-N-acetyl-beta-muramate + ATP + H2O = N-acetyl-D-muramate 6-phosphate + ADP + H(+). The protein operates within amino-sugar metabolism; 1,6-anhydro-N-acetylmuramate degradation. It functions in the pathway cell wall biogenesis; peptidoglycan recycling. Functionally, catalyzes the specific phosphorylation of 1,6-anhydro-N-acetylmuramic acid (anhMurNAc) with the simultaneous cleavage of the 1,6-anhydro ring, generating MurNAc-6-P. Is required for the utilization of anhMurNAc either imported from the medium or derived from its own cell wall murein, and thus plays a role in cell wall recycling. The polypeptide is Anhydro-N-acetylmuramic acid kinase (Salmonella paratyphi A (strain ATCC 9150 / SARB42)).